The following is a 75-amino-acid chain: Putative defensin-like protein 55 (75 aa).

The first 19 residues, 1-19 (MNITKAYVIFFLVVILTNS), serve as a signal peptide directing secretion. 4 disulfides stabilise this stretch: Cys-39–Cys-73, Cys-43–Cys-66, Cys-52–Cys-71, and Cys-56–Cys-72.

This sequence belongs to the DEFL family.

It is found in the secreted. This is Putative defensin-like protein 55 from Arabidopsis thaliana (Mouse-ear cress).